A 281-amino-acid chain; its full sequence is 2-dehydro-3-deoxyphosphooctonate aldolase (281 aa).

Belongs to the KdsA family.

It localises to the cytoplasm. It catalyses the reaction D-arabinose 5-phosphate + phosphoenolpyruvate + H2O = 3-deoxy-alpha-D-manno-2-octulosonate-8-phosphate + phosphate. The protein operates within carbohydrate biosynthesis; 3-deoxy-D-manno-octulosonate biosynthesis; 3-deoxy-D-manno-octulosonate from D-ribulose 5-phosphate: step 2/3. It functions in the pathway bacterial outer membrane biogenesis; lipopolysaccharide biosynthesis. In Pseudomonas fluorescens (strain ATCC BAA-477 / NRRL B-23932 / Pf-5), this protein is 2-dehydro-3-deoxyphosphooctonate aldolase.